A 520-amino-acid polypeptide reads, in one-letter code: Cytosol aminopeptidase (520 aa).

Zn(2+)-binding residues include lysine 286 and aspartate 291. Residue lysine 298 is part of the active site. Residues aspartate 309, aspartate 368, and glutamate 370 each coordinate Zn(2+). Arginine 372 is a catalytic residue.

The protein belongs to the peptidase M17 family. In terms of assembly, homohexamer. Requires Zn(2+) as cofactor.

It localises to the cytoplasm. The catalysed reaction is Release of an N-terminal amino acid, Xaa-|-Yaa-, in which Xaa is preferably Leu, but may be other amino acids including Pro although not Arg or Lys, and Yaa may be Pro. Amino acid amides and methyl esters are also readily hydrolyzed, but rates on arylamides are exceedingly low.. It catalyses the reaction Release of N-terminal proline from a peptide.. Functionally, presumably involved in the processing and regular turnover of intracellular proteins. Catalyzes the removal of unsubstituted N-terminal amino acids from various peptides. This Dictyostelium discoideum (Social amoeba) protein is Cytosol aminopeptidase (lap).